Here is a 246-residue protein sequence, read N- to C-terminus: ATP synthase subunit a (246 aa).

Residues 1–3 (MIY) constitute a propeptide, removed in mature form. Helical transmembrane passes span 25–45 (VNNY…SVFL), 51–71 (LGFN…LNMV), 79–99 (GGMY…ANLV), 112–132 (LVAI…MGLS), 138–158 (FFAL…LVLI), 178–198 (VLSG…LMGS), and 203–223 (FMGG…EFAI).

It belongs to the ATPase A chain family. In terms of assembly, F-type ATPases have 2 components, CF(1) - the catalytic core - and CF(0) - the membrane proton channel. CF(1) has five subunits: alpha(3), beta(3), gamma(1), delta(1), epsilon(1). CF(0) has three main subunits: a, b and c.

It is found in the mitochondrion inner membrane. Its function is as follows. Mitochondrial membrane ATP synthase (F(1)F(0) ATP synthase or Complex V) produces ATP from ADP in the presence of a proton gradient across the membrane which is generated by electron transport complexes of the respiratory chain. F-type ATPases consist of two structural domains, F(1) - containing the extramembraneous catalytic core and F(0) - containing the membrane proton channel, linked together by a central stalk and a peripheral stalk. During catalysis, ATP synthesis in the catalytic domain of F(1) is coupled via a rotary mechanism of the central stalk subunits to proton translocation. Key component of the proton channel; it may play a direct role in the translocation of protons across the membrane. The sequence is that of ATP synthase subunit a (ATP6) from Debaryomyces hansenii (strain ATCC 36239 / CBS 767 / BCRC 21394 / JCM 1990 / NBRC 0083 / IGC 2968) (Yeast).